The following is a 160-amino-acid chain: uncharacterized protein (160 aa).

This is an uncharacterized protein from Galliformes (FAdV-1).